We begin with the raw amino-acid sequence, 361 residues long: Oxidoreductase lepF (361 aa).

A helical membrane pass occupies residues 257–277 (MLMLVLQAVLLPVFYVVAMPL).

This sequence belongs to the NmrA-type oxidoreductase family.

It is found in the membrane. Oxidoreductase; part of the gene cluster 23 that mediates the biosynthesis of a family of 2-pyridones known as leporins. The hybrid PKS-NRPS synthetase lepA and the enoyl reductase lepG are responsible for fusion of phenylalanine with a hexaketide and subsequent release of the stable tetramic acid precursor, pre-leporin C. Because lepA lacks a designated enoylreductase (ER) domain, the required activity is provided the enoyl reductase lepG. It is possible that the dehydrogenase lepF also participates in production of pre-leporin C. Cytochrome P450 monooxygenase lepH is then required for the ring expansion step to yield leporin C. Leporin C is then presumably further oxidized by the N-hydroxylase lepD to form leporin B. LepI may possess a function in biosynthesis upstream of lepA. Leporin B is further oxidized in the presence of ferric ion to give the leporin B trimer-iron chelate, but whether or not this reaction is catalyzed by an enzyme in the pathway or by ferric ion is not determined yet. This chain is Oxidoreductase lepF, found in Aspergillus flavus (strain ATCC 200026 / FGSC A1120 / IAM 13836 / NRRL 3357 / JCM 12722 / SRRC 167).